The following is a 122-amino-acid chain: Small ribosomal subunit protein uS13 (122 aa).

The segment at 98–122 is disordered; that stretch reads VRGQKTKSNARTRKGPRPSRIKKKK. Over residues 101–122 the composition is skewed to basic residues; that stretch reads QKTKSNARTRKGPRPSRIKKKK.

This sequence belongs to the universal ribosomal protein uS13 family. Part of the 30S ribosomal subunit. Forms a loose heterodimer with protein S19. Forms two bridges to the 50S subunit in the 70S ribosome.

Functionally, located at the top of the head of the 30S subunit, it contacts several helices of the 16S rRNA. In the 70S ribosome it contacts the 23S rRNA (bridge B1a) and protein L5 of the 50S subunit (bridge B1b), connecting the 2 subunits; these bridges are implicated in subunit movement. Contacts the tRNAs in the A and P-sites. This Thermosipho africanus (strain TCF52B) protein is Small ribosomal subunit protein uS13.